Here is a 282-residue protein sequence, read N- to C-terminus: Acetyl-coenzyme A carboxylase carboxyl transferase subunit beta (282 aa).

The 258-residue stretch at 25–282 folds into the CoA carboxyltransferase N-terminal domain; that stretch reads LWTKCVSCGE…SSILTMLYRP (258 aa). Residues cysteine 29, cysteine 32, cysteine 48, and cysteine 51 each contribute to the Zn(2+) site. Residues 29–51 form a C4-type zinc finger; that stretch reads CVSCGETIYTKDIENNLNVCPKC.

Belongs to the AccD/PCCB family. As to quaternary structure, acetyl-CoA carboxylase is a heterohexamer composed of biotin carboxyl carrier protein (AccB), biotin carboxylase (AccC) and two subunits each of ACCase subunit alpha (AccA) and ACCase subunit beta (AccD). Zn(2+) is required as a cofactor.

Its subcellular location is the cytoplasm. It catalyses the reaction N(6)-carboxybiotinyl-L-lysyl-[protein] + acetyl-CoA = N(6)-biotinyl-L-lysyl-[protein] + malonyl-CoA. Its pathway is lipid metabolism; malonyl-CoA biosynthesis; malonyl-CoA from acetyl-CoA: step 1/1. In terms of biological role, component of the acetyl coenzyme A carboxylase (ACC) complex. Biotin carboxylase (BC) catalyzes the carboxylation of biotin on its carrier protein (BCCP) and then the CO(2) group is transferred by the transcarboxylase to acetyl-CoA to form malonyl-CoA. The polypeptide is Acetyl-coenzyme A carboxylase carboxyl transferase subunit beta (Citrifermentans bemidjiense (strain ATCC BAA-1014 / DSM 16622 / JCM 12645 / Bem) (Geobacter bemidjiensis)).